The sequence spans 108 residues: Thiosulfate sulfurtransferase GlpE (108 aa).

Residues Q17 to A105 enclose the Rhodanese domain. The active-site Cysteine persulfide intermediate is the C65.

It belongs to the GlpE family.

The protein localises to the cytoplasm. It carries out the reaction thiosulfate + hydrogen cyanide = thiocyanate + sulfite + 2 H(+). The catalysed reaction is thiosulfate + [thioredoxin]-dithiol = [thioredoxin]-disulfide + hydrogen sulfide + sulfite + 2 H(+). Its function is as follows. Transferase that catalyzes the transfer of sulfur from thiosulfate to thiophilic acceptors such as cyanide or dithiols. May function in a CysM-independent thiosulfate assimilation pathway by catalyzing the conversion of thiosulfate to sulfite, which can then be used for L-cysteine biosynthesis. The sequence is that of Thiosulfate sulfurtransferase GlpE from Escherichia coli O127:H6 (strain E2348/69 / EPEC).